Consider the following 122-residue polypeptide: Large ribosomal subunit protein uL14 (122 aa).

This sequence belongs to the universal ribosomal protein uL14 family. As to quaternary structure, part of the 50S ribosomal subunit. Forms a cluster with proteins L3 and L19. In the 70S ribosome, L14 and L19 interact and together make contacts with the 16S rRNA in bridges B5 and B8.

Its function is as follows. Binds to 23S rRNA. Forms part of two intersubunit bridges in the 70S ribosome. The chain is Large ribosomal subunit protein uL14 from Fervidobacterium nodosum (strain ATCC 35602 / DSM 5306 / Rt17-B1).